The sequence spans 279 residues: 3-methyl-2-oxobutanoate hydroxymethyltransferase (279 aa).

Mg(2+)-binding residues include aspartate 43 and aspartate 82. Residues 43 to 44, aspartate 82, and lysine 112 contribute to the 3-methyl-2-oxobutanoate site; that span reads DS. Residue glutamate 114 coordinates Mg(2+). Glutamate 181 functions as the Proton acceptor in the catalytic mechanism.

The protein belongs to the PanB family. In terms of assembly, homodecamer; pentamer of dimers. The cofactor is Mg(2+).

Its subcellular location is the cytoplasm. The catalysed reaction is 3-methyl-2-oxobutanoate + (6R)-5,10-methylene-5,6,7,8-tetrahydrofolate + H2O = 2-dehydropantoate + (6S)-5,6,7,8-tetrahydrofolate. The protein operates within cofactor biosynthesis; (R)-pantothenate biosynthesis; (R)-pantoate from 3-methyl-2-oxobutanoate: step 1/2. Its function is as follows. Catalyzes the reversible reaction in which hydroxymethyl group from 5,10-methylenetetrahydrofolate is transferred onto alpha-ketoisovalerate to form ketopantoate. This Geobacillus thermodenitrificans (strain NG80-2) protein is 3-methyl-2-oxobutanoate hydroxymethyltransferase.